Consider the following 217-residue polypeptide: MTDTNKMIINLAVFGRTQSGKSSAGNVLLGSADFYSSFAPGSVTKECSLGRSCHLHGFMRRGGQEISLQIQVLDTPGYPHSKLSTRCVKQEVKKALLHHFGQEGLHLALLVQRADVPFFGQEASNAVQLMQELLGDSCKNYMAVLFTHAEELEEAGLSEEEYLREASDTLLTLLDSVQHRYIFLSGRGNLCNEQRIKILERIMEFIKENHFQVLSLA.

Residues 6–217 (KMIINLAVFG…ENHFQVLSLA (212 aa)) form the AIG1-type G domain. GTP contacts are provided by residues 15–23 (GRTQSGKSS), S36, and 148–150 (HAE).

The protein belongs to the TRAFAC class TrmE-Era-EngA-EngB-Septin-like GTPase superfamily. AIG1/Toc34/Toc159-like paraseptin GTPase family. IAN subfamily.

The polypeptide is GTPase IMAP family member GIMD1 (Gimd1) (Mus musculus (Mouse)).